The chain runs to 574 residues: Alpha-farnesene synthase (574 aa).

Residues aspartate 326, aspartate 330, and glutamate 478 each contribute to the Mn(2+) site. The short motif at 326–330 (DDIYD) is the DDXXD motif element.

Belongs to the terpene synthase family. Tpsd subfamily. Mn(2+) is required as a cofactor.

It localises to the cytoplasm. The catalysed reaction is (2E,6E)-farnesyl diphosphate = (3E,6E)-alpha-farnesene + diphosphate. The protein operates within terpene metabolism; oleoresin biosynthesis. In terms of biological role, involved in sesquiterpene (C15) biosynthesis. The major product is alpha-farnesene. This chain is Alpha-farnesene synthase (PT5), found in Pinus taeda (Loblolly pine).